The following is a 461-amino-acid chain: Cysteine--tRNA ligase (461 aa).

Residue C28 coordinates Zn(2+). A 'HIGH' region motif is present at residues 30 to 40 (ITVYDLCHIGH). Zn(2+) contacts are provided by C209, H234, and E238. Positions 266 to 270 (KMSKS) match the 'KMSKS' region motif. K269 is a binding site for ATP.

It belongs to the class-I aminoacyl-tRNA synthetase family. In terms of assembly, monomer. Zn(2+) serves as cofactor.

It localises to the cytoplasm. The enzyme catalyses tRNA(Cys) + L-cysteine + ATP = L-cysteinyl-tRNA(Cys) + AMP + diphosphate. This is Cysteine--tRNA ligase from Shigella boydii serotype 18 (strain CDC 3083-94 / BS512).